We begin with the raw amino-acid sequence, 142 residues long: Large ribosomal subunit protein uL11 (142 aa).

The protein belongs to the universal ribosomal protein uL11 family. Part of the ribosomal stalk of the 50S ribosomal subunit. Interacts with L10 and the large rRNA to form the base of the stalk. L10 forms an elongated spine to which L12 dimers bind in a sequential fashion forming a multimeric L10(L12)X complex. One or more lysine residues are methylated.

In terms of biological role, forms part of the ribosomal stalk which helps the ribosome interact with GTP-bound translation factors. This is Large ribosomal subunit protein uL11 from Hahella chejuensis (strain KCTC 2396).